Reading from the N-terminus, the 300-residue chain is 4-hydroxy-tetrahydrodipicolinate synthase (300 aa).

Thr49 lines the pyruvate pocket. Tyr137 functions as the Proton donor/acceptor in the catalytic mechanism. Lys166 functions as the Schiff-base intermediate with substrate in the catalytic mechanism. Ile208 contributes to the pyruvate binding site.

The protein belongs to the DapA family. In terms of assembly, homotetramer; dimer of dimers.

Its subcellular location is the cytoplasm. The enzyme catalyses L-aspartate 4-semialdehyde + pyruvate = (2S,4S)-4-hydroxy-2,3,4,5-tetrahydrodipicolinate + H2O + H(+). It functions in the pathway amino-acid biosynthesis; L-lysine biosynthesis via DAP pathway; (S)-tetrahydrodipicolinate from L-aspartate: step 3/4. Its function is as follows. Catalyzes the condensation of (S)-aspartate-beta-semialdehyde [(S)-ASA] and pyruvate to 4-hydroxy-tetrahydrodipicolinate (HTPA). This Methanopyrus kandleri (strain AV19 / DSM 6324 / JCM 9639 / NBRC 100938) protein is 4-hydroxy-tetrahydrodipicolinate synthase.